A 347-amino-acid polypeptide reads, in one-letter code: GMP reductase (347 aa).

108-131 contributes to the NADP(+) binding site; sequence ADFEKTKQILDLNPALNFVCIDVA. Positions 181 and 183 each coordinate K(+). Cys-186 serves as the catalytic Thioimidate intermediate. 216-239 contributes to the NADP(+) binding site; sequence IVSDGGCTTPGDVAKAFGGGADFV.

It belongs to the IMPDH/GMPR family. GuaC type 1 subfamily. Homotetramer.

The enzyme catalyses IMP + NH4(+) + NADP(+) = GMP + NADPH + 2 H(+). Catalyzes the irreversible NADPH-dependent deamination of GMP to IMP. It functions in the conversion of nucleobase, nucleoside and nucleotide derivatives of G to A nucleotides, and in maintaining the intracellular balance of A and G nucleotides. The chain is GMP reductase from Shigella boydii serotype 18 (strain CDC 3083-94 / BS512).